Consider the following 762-residue polypeptide: Mitochondrial intermediate peptidase (762 aa).

A mitochondrion-targeting transit peptide spans 1 to 28 (MQVRTLLTLGKKKVIGNRQCILSLYRKY). Residue His544 coordinates Zn(2+). Glu545 is an active-site residue. The Zn(2+) site is built by His548 and His551.

The protein belongs to the peptidase M3 family. The cofactor is Zn(2+).

The protein resides in the mitochondrion matrix. The enzyme catalyses Release of an N-terminal octapeptide as second stage of processing of some proteins imported into the mitochondrion.. Its function is as follows. Cleaves proteins, imported into the mitochondrion, to their mature size. While most mitochondrial precursor proteins are processed to the mature form in one step by mitochondrial processing peptidase (MPP), the sequential cleavage by MIP of an octapeptide after initial processing by MPP is a required step for a subgroup of nuclear-encoded precursor proteins destined for the matrix or the inner membrane. The polypeptide is Mitochondrial intermediate peptidase (oct1) (Schizosaccharomyces pombe (strain 972 / ATCC 24843) (Fission yeast)).